The primary structure comprises 272 residues: Shikimate dehydrogenase (NADP(+)) (272 aa).

Residues 19–21 and threonine 66 each bind shikimate; that span reads SLS. Lysine 70 serves as the catalytic Proton acceptor. An NADP(+)-binding site is contributed by glutamate 82. Residues asparagine 91 and aspartate 106 each coordinate shikimate. NADP(+)-binding positions include 129-133, 151-156, and isoleucine 214; these read GAGGA and NRTPEK. Tyrosine 216 provides a ligand contact to shikimate. Glycine 237 provides a ligand contact to NADP(+).

This sequence belongs to the shikimate dehydrogenase family. In terms of assembly, homodimer.

It carries out the reaction shikimate + NADP(+) = 3-dehydroshikimate + NADPH + H(+). Its pathway is metabolic intermediate biosynthesis; chorismate biosynthesis; chorismate from D-erythrose 4-phosphate and phosphoenolpyruvate: step 4/7. Its function is as follows. Involved in the biosynthesis of the chorismate, which leads to the biosynthesis of aromatic amino acids. Catalyzes the reversible NADPH linked reduction of 3-dehydroshikimate (DHSA) to yield shikimate (SA). The chain is Shikimate dehydrogenase (NADP(+)) from Thermococcus kodakarensis (strain ATCC BAA-918 / JCM 12380 / KOD1) (Pyrococcus kodakaraensis (strain KOD1)).